The primary structure comprises 83 residues: Small ribosomal subunit protein bS16 (83 aa).

It belongs to the bacterial ribosomal protein bS16 family.

The chain is Small ribosomal subunit protein bS16 from Pseudomonas fluorescens (strain ATCC BAA-477 / NRRL B-23932 / Pf-5).